The sequence spans 553 residues: Solute carrier family 2, facilitated glucose transporter member 10 (553 aa).

Topologically, residues 1–15 (MGLRSTTLVLAATSS) are cytoplasmic. A helical transmembrane segment spans residues 16–36 (LLGGLIFGYELGIISGALLML). At 37-48 (KTVFQLTCFEQE) the chain is on the extracellular side. A helical membrane pass occupies residues 49-69 (ALVSAVLFGALLASLIGGFII). At 70–82 (DRSGRRTSIMGSN) the chain is on the cytoplasmic side. The chain crosses the membrane as a helical span at residues 83–103 (LVVLAGSIILIATSSFWWLVV). The Extracellular portion of the chain corresponds to 104–105 (GR). Residues 106 to 126 (VTVGFAISISSMACCIYVSEI) form a helical membrane-spanning segment. At 127 to 132 (VRPHQR) the chain is on the cytoplasmic side. A helical membrane pass occupies residues 133–153 (GTLVSLYETGITVGILISYAM). The Extracellular segment spans residues 154-165 (NYFLSAVNDGWK). The chain crosses the membrane as a helical span at residues 166–186 (YMFGLAIIPAAFQFIVILFLP). Over 187 to 240 (SKPHTLNFWEQDSDNGFIELEEAGESGEFKPDTYDKQYTFLDLFRSKDNMRTRT) the chain is Cytoplasmic. A helical membrane pass occupies residues 241 to 261 (LLGLGLVLFQQFTGQPNVLYY). Residue 250 to 251 (QQ) participates in D-glucose binding. Residues 262-277 (ASTIFRSVGFQSNSSA) are Extracellular-facing. N-linked (GlcNAc...) asparagine glycosylation occurs at Asn-274. The chain crosses the membrane as a helical span at residues 278–298 (VLASVGLGVVKVASTLIAICF). Over 299 to 305 (ADKAGRR) the chain is Cytoplasmic. A helical transmembrane segment spans residues 306-326 (ILLLAGCIVMTIAISGIGIVS). Topologically, residues 327–413 (FMVELDSHRD…PPAGPDSNYA (87 aa)) are extracellular. Residues Asn-344, Asn-351, and Asn-400 are each glycosylated (N-linked (GlcNAc...) asparagine). Residues 414–434 (ILNWITLLSMMAFVSAFSIGF) traverse the membrane as a helical segment. Residues 435 to 462 (GPMTWLVLSEIYPADIRGRAFAFCNSFN) lie on the Cytoplasmic side of the membrane. Trp-439 provides a ligand contact to D-glucose. A helical membrane pass occupies residues 463-482 (WAANLLITLTFLEVIGSIGL). Position 483 (Gly-483) is a topological domain, extracellular. A helical membrane pass occupies residues 484–504 (WTFLLYGGVGLLAIAFIYFFI). Residues 505-553 (PETKGQSLEEIDQQLSSKRISKRRETSKGVRKRPSTGPPYQRVGKSNWT) are Cytoplasmic-facing. The tract at residues 522–553 (KRISKRRETSKGVRKRPSTGPPYQRVGKSNWT) is disordered.

This sequence belongs to the major facilitator superfamily. Sugar transporter (TC 2.A.1.1) family. Glucose transporter subfamily.

The protein resides in the endomembrane system. It localises to the cytoplasm. It is found in the perinuclear region. The enzyme catalyses D-glucose(out) = D-glucose(in). Functionally, facilitative glucose transporter required for the development of the cardiovascular system. In Xenopus laevis (African clawed frog), this protein is Solute carrier family 2, facilitated glucose transporter member 10.